Reading from the N-terminus, the 601-residue chain is Glutamyl-tRNA(Gln) amidotransferase subunit B, mitochondrial (601 aa).

The N-terminal 52 residues, 1-52 (MLQQWLRQSPRAARVLRGSCCRGPQSGSLRHSPLPTAPHRCIRSLQTSATES), are a transit peptide targeting the mitochondrion.

The protein belongs to the GatB/GatE family. GatB subfamily. As to quaternary structure, subunit of the heterotrimeric GatCAB amidotransferase (AdT) complex, composed of A, B and C subunits.

It localises to the mitochondrion. It catalyses the reaction L-glutamyl-tRNA(Gln) + L-glutamine + ATP + H2O = L-glutaminyl-tRNA(Gln) + L-glutamate + ADP + phosphate + H(+). Allows the formation of correctly charged Gln-tRNA(Gln) through the transamidation of misacylated Glu-tRNA(Gln) in the mitochondria. The reaction takes place in the presence of glutamine and ATP through an activated gamma-phospho-Glu-tRNA(Gln). The chain is Glutamyl-tRNA(Gln) amidotransferase subunit B, mitochondrial from Aspergillus fumigatus (strain ATCC MYA-4609 / CBS 101355 / FGSC A1100 / Af293) (Neosartorya fumigata).